Consider the following 338-residue polypeptide: Holliday junction branch migration complex subunit RuvB (338 aa).

Residues 4-186 (ADRLIAPDNP…FGITQRLEYY (183 aa)) form a large ATPase domain (RuvB-L) region. ATP contacts are provided by residues isoleucine 25, arginine 26, glycine 67, lysine 70, threonine 71, threonine 72, 133–135 (EDY), arginine 176, tyrosine 186, and arginine 223. Threonine 71 lines the Mg(2+) pocket. The tract at residues 187–257 (KVEDLQNIVQ…VADKALNMLD (71 aa)) is small ATPAse domain (RuvB-S). Residues 260–338 (AKGFDYMDRK…HFGIDKPSNR (79 aa)) form a head domain (RuvB-H) region. DNA-binding residues include arginine 296, arginine 315, and arginine 320.

The protein belongs to the RuvB family. In terms of assembly, homohexamer. Forms an RuvA(8)-RuvB(12)-Holliday junction (HJ) complex. HJ DNA is sandwiched between 2 RuvA tetramers; dsDNA enters through RuvA and exits via RuvB. An RuvB hexamer assembles on each DNA strand where it exits the tetramer. Each RuvB hexamer is contacted by two RuvA subunits (via domain III) on 2 adjacent RuvB subunits; this complex drives branch migration. In the full resolvosome a probable DNA-RuvA(4)-RuvB(12)-RuvC(2) complex forms which resolves the HJ.

The protein localises to the cytoplasm. It catalyses the reaction ATP + H2O = ADP + phosphate + H(+). The RuvA-RuvB-RuvC complex processes Holliday junction (HJ) DNA during genetic recombination and DNA repair, while the RuvA-RuvB complex plays an important role in the rescue of blocked DNA replication forks via replication fork reversal (RFR). RuvA specifically binds to HJ cruciform DNA, conferring on it an open structure. The RuvB hexamer acts as an ATP-dependent pump, pulling dsDNA into and through the RuvAB complex. RuvB forms 2 homohexamers on either side of HJ DNA bound by 1 or 2 RuvA tetramers; 4 subunits per hexamer contact DNA at a time. Coordinated motions by a converter formed by DNA-disengaged RuvB subunits stimulates ATP hydrolysis and nucleotide exchange. Immobilization of the converter enables RuvB to convert the ATP-contained energy into a lever motion, pulling 2 nucleotides of DNA out of the RuvA tetramer per ATP hydrolyzed, thus driving DNA branch migration. The RuvB motors rotate together with the DNA substrate, which together with the progressing nucleotide cycle form the mechanistic basis for DNA recombination by continuous HJ branch migration. Branch migration allows RuvC to scan DNA until it finds its consensus sequence, where it cleaves and resolves cruciform DNA. The polypeptide is Holliday junction branch migration complex subunit RuvB (Vibrio atlanticus (strain LGP32) (Vibrio splendidus (strain Mel32))).